The following is a 232-amino-acid chain: MGIGKSKMDPCHLSVPWGKSQSVDTSQSHHMSDSKQSEEISLHGDAVCSSTAEMPAEEQEGVEERPEEDTEEEVFLKFVILHAEEDTGEALRVQSLLENDFGIKPGIIFAEMPCGRQHLQNLDDAVNGSAWTILLLTENFLRDTWCKFQFYSSLMNSVNRQHKYNSVIPMRPLNNPLPRERTPFALRTINALEEESRGFPTQVERIFQESVYRIQQAIWKETRNTVQRQSVA.

A compositionally biased stretch (basic and acidic residues) spans 1-10 (MGIGKSKMDP). The disordered stretch occupies residues 1–71 (MGIGKSKMDP…VEERPEEDTE (71 aa)). Gly2 carries the N-myristoyl glycine lipid modification. Residues 19-29 (KSQSVDTSQSH) show a composition bias toward polar residues. The span at 30 to 42 (HMSDSKQSEEISL) shows a compositional bias: basic and acidic residues. Acidic residues predominate over residues 55-71 (PAEEQEGVEERPEEDTE). In terms of domain architecture, TIR spans 70-226 (TEEEVFLKFV…AIWKETRNTV (157 aa)). Tyr164 carries the post-translational modification Phosphotyrosine.

As to quaternary structure, homodimer. Interacts with TLR4, TICAM1, IRF3 and IRF7 in response to LPS. Interacts with IL1R1, IL1RAP, IRAK2, IRAK3 and TRAF6. Interacts with protein kinase-inactive mutants of IRAK1 and IRAK4. Isoform 1 interacts with isoform 2; the interaction occurs in late endosomes and disrupts the interaction between isoform 1 and TICAM1. Interacts with MYD88; the interaction decreases after IL-18 stimulation in a time-dependent manner. Interacts with IL18R1 and IL18RAP. Interacts with TLR2. Interacts with RAB11FIP2. Myristoylated. Required for membrane association which is critical for its ability to initiate efficient signaling. In terms of processing, phosphorylated by PRKCE in response to LPS. Phosphorylation is essential for its function. It is depleted from the membrane upon phosphorylation. Tyrosine phosphorylation is inhibited by phosphatase PTPN4.

The protein resides in the cytoplasm. The protein localises to the golgi apparatus. Its subcellular location is the cell membrane. It is found in the endoplasmic reticulum. It localises to the early endosome. The protein resides in the late endosome. The protein localises to the cell projection. Its subcellular location is the phagocytic cup. Functionally, functions as a sorting adapter in different signaling pathways to facilitate downstream signaling leading to type I interferon induction. In TLR4 signaling, physically bridges TLR4 and TICAM1 and functionally transmits signal to TICAM1 in early endosomes after endocytosis of TLR4. In TLR2 signaling, physically bridges TLR2 and MYD88 and is required for the TLR2-dependent movement of MYD88 to endosomes following ligand engagement. Involved in IL-18 signaling and is proposed to function as a sorting adapter for MYD88 in IL-18 signaling during adaptive immune response. Forms a complex with RAB11FIP2 that is recruited to the phagosomes to promote the activation of the actin-regulatory GTPases RAC1 and CDC42 and subsequent phagocytosis of Gram-negative bacteria. This chain is TIR domain-containing adapter molecule 2 (TICAM2), found in Bos taurus (Bovine).